The following is a 474-amino-acid chain: MGATEVLTSYCVVLCLLQMVALSSGHFTVIGSQRPILATLGGNVELNCQLSPPQQAQHMEIRWFRNRYTQPVHLYRNGKNLHGETMSKYVERTELLTDAFNEGKVILRILNVTVDDGGAYHCVFKDGEFYEEHITEVKVTATSSDIQILMHTPNIKGVMLECHSGGWFPQPHMEWRNSKGEVIQATSKFHSQDKNKLFNMSMVLFIEASSHRNVICYFQNLVTHQEQSINIVLSGELFSWKIVWIMILSTISFVMIDFCMTYCVQQQLIHEESLSTVDNDQCESDQSEGTCYKRNYPWIIIAVVPIISVFAIIGVMLFLHLEQRVTILEQHFELDTLWLEDISVILCVVIVSNINLIPLIYFRLHEHVPRFKDRSPILNKAVVFLHFIYFSIVCGTILLVHLQLRNKVSISDSLFSLYNSWLTDISMILGFLLSIFIVTTIAKSSLFNKKWCIGLCIHMKEAEATGGPCEGEEL.

Positions 1-25 are cleaved as a signal peptide; that stretch reads MGATEVLTSYCVVLCLLQMVALSSG. Topologically, residues 26-241 are extracellular; sequence HFTVIGSQRP…VLSGELFSWK (216 aa). The 114-residue stretch at 27 to 140 folds into the Ig-like V-type domain; sequence FTVIGSQRPI…EEHITEVKVT (114 aa). Intrachain disulfides connect C48–C122 and C162–C216. N-linked (GlcNAc...) asparagine glycosylation is found at N111 and N199. One can recognise an Ig-like C1-type domain in the interval 141–234; the sequence is ATSSDIQILM…QEQSINIVLS (94 aa). The helical transmembrane segment at 242–262 threads the bilayer; sequence IVWIMILSTISFVMIDFCMTY. The Cytoplasmic portion of the chain corresponds to 263–298; the sequence is CVQQQLIHEESLSTVDNDQCESDQSEGTCYKRNYPW. The helical transmembrane segment at 299–319 threads the bilayer; the sequence is IIIAVVPIISVFAIIGVMLFL. Over 320-341 the chain is Extracellular; that stretch reads HLEQRVTILEQHFELDTLWLED. The chain crosses the membrane as a helical span at residues 342–362; it reads ISVILCVVIVSNINLIPLIYF. Topologically, residues 363–381 are cytoplasmic; sequence RLHEHVPRFKDRSPILNKA. A helical transmembrane segment spans residues 382–402; that stretch reads VVFLHFIYFSIVCGTILLVHL. At 403–420 the chain is on the extracellular side; it reads QLRNKVSISDSLFSLYNS. The chain crosses the membrane as a helical span at residues 421–441; the sequence is WLTDISMILGFLLSIFIVTTI. At 442–474 the chain is on the cytoplasmic side; that stretch reads AKSSLFNKKWCIGLCIHMKEAEATGGPCEGEEL.

The protein belongs to the SKINT family. Expressed in skin, thymus and, to a lower extent, bladder and testis.

The protein localises to the membrane. In terms of biological role, may act by engaging a cell surface molecule on immature T-cells in the embryonic thymus. This is Selection and upkeep of intraepithelial T-cells protein 4 (Skint4) from Mus musculus (Mouse).